Consider the following 212-residue polypeptide: Small ribosomal subunit protein eS6 (212 aa).

The protein belongs to the eukaryotic ribosomal protein eS6 family.

This Metallosphaera sedula (strain ATCC 51363 / DSM 5348 / JCM 9185 / NBRC 15509 / TH2) protein is Small ribosomal subunit protein eS6.